We begin with the raw amino-acid sequence, 366 residues long: Aminomethyltransferase (366 aa).

Belongs to the GcvT family. The glycine cleavage system is composed of four proteins: P, T, L and H.

It catalyses the reaction N(6)-[(R)-S(8)-aminomethyldihydrolipoyl]-L-lysyl-[protein] + (6S)-5,6,7,8-tetrahydrofolate = N(6)-[(R)-dihydrolipoyl]-L-lysyl-[protein] + (6R)-5,10-methylene-5,6,7,8-tetrahydrofolate + NH4(+). Its function is as follows. The glycine cleavage system catalyzes the degradation of glycine. The sequence is that of Aminomethyltransferase from Bacillus cereus (strain B4264).